A 520-amino-acid chain; its full sequence is Beta-galactoside-specific lectin 4 (520 aa).

Asn-107 carries N-linked (GlcNAc...) asparagine glycosylation. Glu-159 is an active-site residue. The cysteines at positions 240 and 266 are disulfide-linked. A propeptide spans 241–265 (GERPSSSDVRYWPLVIRPVIADDVT) (connecting peptide). Residues 269–396 (SEPTVRIVGR…YTLGQGWLAG (128 aa)) form the Ricin B-type lectin 1 domain. 284–286 (DVR) is a binding site for D-galactose. N-linked (GlcNAc...) asparagine glycosylation occurs at Asn-322. Cys-325 and Cys-342 are joined by a disulfide. N-linked (GlcNAc...) asparagine glycans are attached at residues Asn-357 and Asn-397. Positions 400 to 520 (APREVTIYGF…KPNQMWLPVP (121 aa)) constitute a Ricin B-type lectin 2 domain. 2 disulfides stabilise this stretch: Cys-413–Cys-426 and Cys-451–Cys-467. Residue 494-496 (DVA) coordinates D-galactose.

This sequence belongs to the ribosome-inactivating protein family. Type 2 RIP subfamily. As to quaternary structure, disulfide-linked dimer of A and B chains.

The enzyme catalyses Endohydrolysis of the N-glycosidic bond at one specific adenosine on the 28S rRNA.. Functionally, the A chain is responsible for inhibiting protein synthesis through the catalytic inactivation of 60S ribosomal subunits by removing adenine from position 4,324 of 28S rRNA. The B chain binds to cell receptors and probably facilitates the entry into the cell of the A chain; B chains are also responsible for cell agglutination (lectin activity). Inhibits growth of the human tumor cell line Molt4. This chain is Beta-galactoside-specific lectin 4, found in Viscum album (European mistletoe).